Consider the following 193-residue polypeptide: Surfactant protein C (193 aa).

Residues 1–23 constitute a propeptide that is removed on maturation; sequence MDMSSKEVLMESPPDYSAGPRSQ. 2 S-palmitoyl cysteine lipidation sites follow: C28 and C29. A propeptide spanning residues 59–193 is cleaved from the precursor; it reads HMSQKHTEMV…LCGELPLYYI (135 aa). The 100-residue stretch at 94–193 folds into the BRICHOS domain; sequence FSIGSTGIVV…LCGELPLYYI (100 aa). C121 and C185 are joined by a disulfide. Residues 147–170 are disordered; it reads KPSTPTSKLGQEEGHDTGSESDSS.

It is found in the secreted. It localises to the extracellular space. Its subcellular location is the surface film. Functionally, pulmonary surfactant associated proteins promote alveolar stability by lowering the surface tension at the air-liquid interface in the peripheral air spaces. This is Surfactant protein C from Mus musculus (Mouse).